Consider the following 153-residue polypeptide: Aspartate carbamoyltransferase regulatory chain (153 aa).

Zn(2+) is bound by residues C109, C114, C138, and C141.

This sequence belongs to the PyrI family. Contains catalytic and regulatory chains. Zn(2+) is required as a cofactor.

In terms of biological role, involved in allosteric regulation of aspartate carbamoyltransferase. The chain is Aspartate carbamoyltransferase regulatory chain from Klebsiella pneumoniae subsp. pneumoniae (strain ATCC 700721 / MGH 78578).